The chain runs to 240 residues: Nuclear receptor-interacting protein 3 (240 aa).

The sequence is that of Nuclear receptor-interacting protein 3 (Nrip3) from Mus musculus (Mouse).